The chain runs to 505 residues: 2,3-bisphosphoglycerate-independent phosphoglycerate mutase (505 aa).

Asp-12 and Ser-62 together coordinate Mn(2+). Catalysis depends on Ser-62, which acts as the Phosphoserine intermediate. Residues His-123, 153–154 (RD), Arg-185, Arg-191, 257–260 (RPDR), and Lys-330 contribute to the substrate site. Residues Asp-397, His-401, Asp-438, His-439, and His-456 each coordinate Mn(2+).

This sequence belongs to the BPG-independent phosphoglycerate mutase family. As to quaternary structure, monomer. Requires Mn(2+) as cofactor.

It carries out the reaction (2R)-2-phosphoglycerate = (2R)-3-phosphoglycerate. The protein operates within carbohydrate degradation; glycolysis; pyruvate from D-glyceraldehyde 3-phosphate: step 3/5. In terms of biological role, catalyzes the interconversion of 2-phosphoglycerate and 3-phosphoglycerate. The sequence is that of 2,3-bisphosphoglycerate-independent phosphoglycerate mutase from Staphylococcus aureus (strain MRSA252).